The following is a 47-amino-acid chain: Large ribosomal subunit protein bL34 (47 aa).

Belongs to the bacterial ribosomal protein bL34 family.

The sequence is that of Large ribosomal subunit protein bL34 from Mycobacterium ulcerans (strain Agy99).